Reading from the N-terminus, the 760-residue chain is Cyclin-D-binding Myb-like transcription factor 1 (760 aa).

The interaction with CCND2 stretch occupies residues 1 to 237; the sequence is MSTVEEDSDT…TPEEIEKLKE (237 aa). Residues 24-63 are disordered; it reads DTDGNLILHCPQNDPDEIDSEDSTEPPHKRLCLSSEDDQS. Residues 37 to 47 show a composition bias toward acidic residues; it reads DPDEIDSEDST. The required for transcriptional activation stretch occupies residues 87–170; the sequence is VTMTATTEVA…IDILMNNIER (84 aa). Residues 87-458 form a required for DNA-binding region; it reads VTMTATTEVA…DNTAISPSPM (372 aa). The interaction with CCND1, CCND2 and CCND3 stretch occupies residues 176–690; sequence GIKDATEIIF…PTIVHQVHQT (515 aa). The region spanning 225–263 is the Myb-like 1 domain; that stretch reads GKYTPEEIEKLKELRIKHGNDWATIGAALGRSASSVKDR. The region spanning 268 to 333 is the HTH myb-type domain; the sequence is KDTCNTGKWT…KWLNYLNWKQ (66 aa). Positions 306–329 form a DNA-binding region, H-T-H motif; sequence WAAVAERVGTRSEKQCRSKWLNYL. The Myb-like 2 domain occupies 339–388; sequence WTKEDEINLILRIAELDVADENDINWDLLAEGWSSVRSPQWLRSKWWTIK. The interval 459 to 760 is required for transcriptional activation; it reads AALQIPVQIT…KDVEDLVNCH (302 aa). Disordered regions lie at residues 593–614 and 738–760; these read DSDLHSSDFPEPPDALEADTFP and IGSSLGSPVSEDSKDVEDLVNCH.

It belongs to the DMTF1 family. As to quaternary structure, interacts with the D-type cyclins CCND1, CCND2 and CCND3. Interaction with D-type cyclins may modulate transcriptional activation by this protein. Phosphorylated by the cyclin-D2/CDK4, cyclin-D3/CDK4 and cyclin-D2/CDK6 complexes and to a lesser extent by the cyclin-D1/CDK4 complex.

The protein localises to the nucleus. Its function is as follows. Transcriptional activator which activates the CDKN2A/ARF locus in response to Ras-Raf signaling, thereby promoting p53/TP53-dependent growth arrest. Binds to the consensus sequence 5'-CCCG[GT]ATGT-3'. The protein is Cyclin-D-binding Myb-like transcription factor 1 (Dmtf1) of Rattus norvegicus (Rat).